A 461-amino-acid polypeptide reads, in one-letter code: Epidermin leader peptide-processing serine protease EpiP (461 aa).

A signal peptide spans 1–23 (MNKFKFFIVFLILSLVFLQNEYA). In terms of domain architecture, Peptidase S8 spans 121–459 (QWDMRKITNE…NGKLDVYKLL (339 aa)). Catalysis depends on charge relay system residues Asp149, His194, and Ser402.

It belongs to the peptidase S8 family.

Its pathway is antibiotic biosynthesis; epidermin biosynthesis. In terms of biological role, protease which cleaves the matured lantibiotic from the modified prepeptide. This chain is Epidermin leader peptide-processing serine protease EpiP (epiP), found in Staphylococcus epidermidis.